The primary structure comprises 310 residues: Ribosomal RNA small subunit methyltransferase H (310 aa).

Residues 47 to 49 (GGH), Asp-66, Phe-93, Asp-108, and Gln-115 contribute to the S-adenosyl-L-methionine site.

It belongs to the methyltransferase superfamily. RsmH family.

Its subcellular location is the cytoplasm. The enzyme catalyses cytidine(1402) in 16S rRNA + S-adenosyl-L-methionine = N(4)-methylcytidine(1402) in 16S rRNA + S-adenosyl-L-homocysteine + H(+). Its function is as follows. Specifically methylates the N4 position of cytidine in position 1402 (C1402) of 16S rRNA. In Prochlorococcus marinus (strain MIT 9303), this protein is Ribosomal RNA small subunit methyltransferase H.